The following is a 426-amino-acid chain: Serine hydroxymethyltransferase (426 aa).

(6S)-5,6,7,8-tetrahydrofolate is bound by residues leucine 122 and 126 to 128 (GHL). Lysine 231 bears the N6-(pyridoxal phosphate)lysine mark. (6S)-5,6,7,8-tetrahydrofolate contacts are provided by residues glutamate 247 and 355–357 (SPF).

The protein belongs to the SHMT family. Homodimer. Pyridoxal 5'-phosphate is required as a cofactor.

It is found in the cytoplasm. It carries out the reaction (6R)-5,10-methylene-5,6,7,8-tetrahydrofolate + glycine + H2O = (6S)-5,6,7,8-tetrahydrofolate + L-serine. It functions in the pathway one-carbon metabolism; tetrahydrofolate interconversion. It participates in amino-acid biosynthesis; glycine biosynthesis; glycine from L-serine: step 1/1. Its function is as follows. Catalyzes the reversible interconversion of serine and glycine with tetrahydrofolate (THF) serving as the one-carbon carrier. This reaction serves as the major source of one-carbon groups required for the biosynthesis of purines, thymidylate, methionine, and other important biomolecules. Also exhibits THF-independent aldolase activity toward beta-hydroxyamino acids, producing glycine and aldehydes, via a retro-aldol mechanism. In Cyanothece sp. (strain PCC 7425 / ATCC 29141), this protein is Serine hydroxymethyltransferase.